We begin with the raw amino-acid sequence, 263 residues long: Hydroxyethylthiazole kinase (263 aa).

M41 is a substrate binding site. Positions 117 and 163 each coordinate ATP. G190 is a substrate binding site.

Belongs to the Thz kinase family. Requires Mg(2+) as cofactor.

The catalysed reaction is 5-(2-hydroxyethyl)-4-methylthiazole + ATP = 4-methyl-5-(2-phosphooxyethyl)-thiazole + ADP + H(+). It functions in the pathway cofactor biosynthesis; thiamine diphosphate biosynthesis; 4-methyl-5-(2-phosphoethyl)-thiazole from 5-(2-hydroxyethyl)-4-methylthiazole: step 1/1. In terms of biological role, catalyzes the phosphorylation of the hydroxyl group of 4-methyl-5-beta-hydroxyethylthiazole (THZ). This chain is Hydroxyethylthiazole kinase, found in Exiguobacterium sp. (strain ATCC BAA-1283 / AT1b).